The chain runs to 279 residues: Acetylglutamate kinase (279 aa).

Substrate-binding positions include 64–65 (GG), arginine 86, and asparagine 177.

The protein belongs to the acetylglutamate kinase family. ArgB subfamily.

It is found in the cytoplasm. The catalysed reaction is N-acetyl-L-glutamate + ATP = N-acetyl-L-glutamyl 5-phosphate + ADP. Its pathway is amino-acid biosynthesis; L-arginine biosynthesis; N(2)-acetyl-L-ornithine from L-glutamate: step 2/4. Functionally, catalyzes the ATP-dependent phosphorylation of N-acetyl-L-glutamate. The protein is Acetylglutamate kinase of Campylobacter jejuni (strain RM1221).